The following is a 352-amino-acid chain: Dead end protein homolog 1 (352 aa).

RRM domains follow at residues 58 to 136 (SEVY…RSTE) and 138 to 218 (CELT…WLKP). R336 bears the Omega-N-methylarginine mark.

Interacts with APOBEC3. As to expression, isoform 1 and isoform 2 are expressed in testis. Isoform 1 is expressed continuously in post natal (PN) testis although levels are low between PN1 to PN6. Isoform 2 is expressed from PN 20 onwards. Isoform 2 is strongly expressed in meiotic and in post-meiotic germ cells of the testis with highest expression at the elongated spermatid stage (at protein level). Expressed in testis and heart. Expressed in germ cells and genital ridges. Not detected in testicular tumors.

The protein resides in the nucleus. Its subcellular location is the cytoplasm. RNA-binding factor that positively regulates gene expression by prohibiting miRNA-mediated gene suppression. Relieves miRNA repression in germline cells. Prohibits the function of several miRNAs by blocking the accessibility of target mRNAs. Sequence-specific RNA-binding factor that binds specifically to U-rich regions (URRs) in the 3' untranslated region (3'-UTR) of several mRNAs. Does not bind to miRNAs. Isoform 1 may play a role during primordial germ cell (PGC) survival. However, does not seem to be essential for PGC migration. This is Dead end protein homolog 1 (Dnd1) from Mus musculus (Mouse).